A 115-amino-acid polypeptide reads, in one-letter code: Nucleoid-associated protein Rpic_1036 (115 aa).

Belongs to the YbaB/EbfC family. In terms of assembly, homodimer.

It localises to the cytoplasm. It is found in the nucleoid. Its function is as follows. Binds to DNA and alters its conformation. May be involved in regulation of gene expression, nucleoid organization and DNA protection. The sequence is that of Nucleoid-associated protein Rpic_1036 from Ralstonia pickettii (strain 12J).